The sequence spans 312 residues: HPr kinase/phosphorylase (312 aa).

Catalysis depends on residues His139 and Lys160. 154–161 is a binding site for ATP; sequence GSSGVGKS. Ser161 serves as a coordination point for Mg(2+). The Proton acceptor; for phosphorylation activity. Proton donor; for dephosphorylation activity role is filled by Asp178. The segment at 202-211 is important for the catalytic mechanism of both phosphorylation and dephosphorylation; it reads LEIRGLGIIN. Glu203 is a binding site for Mg(2+). Arg244 is a catalytic residue. Residues 265-270 form an important for the catalytic mechanism of dephosphorylation region; that stretch reads PVRPGR.

The protein belongs to the HPrK/P family. As to quaternary structure, homohexamer. Mg(2+) serves as cofactor.

The catalysed reaction is [HPr protein]-L-serine + ATP = [HPr protein]-O-phospho-L-serine + ADP + H(+). The enzyme catalyses [HPr protein]-O-phospho-L-serine + phosphate + H(+) = [HPr protein]-L-serine + diphosphate. Catalyzes the ATP- as well as the pyrophosphate-dependent phosphorylation of a specific serine residue in HPr, a phosphocarrier protein of the phosphoenolpyruvate-dependent sugar phosphotransferase system (PTS). HprK/P also catalyzes the pyrophosphate-producing, inorganic phosphate-dependent dephosphorylation (phosphorolysis) of seryl-phosphorylated HPr (P-Ser-HPr). The two antagonistic activities of HprK/P are regulated by several intracellular metabolites, which change their concentration in response to the absence or presence of rapidly metabolisable carbon sources (glucose, fructose, etc.) in the growth medium. Therefore, by controlling the phosphorylation state of HPr, HPrK/P is a sensor enzyme that plays a major role in the regulation of carbon metabolism and sugar transport: it mediates carbon catabolite repression (CCR), and regulates PTS-catalyzed carbohydrate uptake and inducer exclusion. This is HPr kinase/phosphorylase from Listeria monocytogenes serotype 4b (strain CLIP80459).